We begin with the raw amino-acid sequence, 315 residues long: Tyrosine--tRNA ligase (315 aa).

Tyr32 lines the L-tyrosine pocket. A 'HIGH' region motif is present at residues 37–45 (PSGEIHLGH). L-tyrosine contacts are provided by Tyr152, Gln156, Asp159, and Gln174. Residues 208–212 (KMSSS) carry the 'KMSKS' region motif. Residue Ser211 coordinates ATP.

The protein belongs to the class-I aminoacyl-tRNA synthetase family. TyrS type 3 subfamily. As to quaternary structure, homodimer.

It is found in the cytoplasm. The enzyme catalyses tRNA(Tyr) + L-tyrosine + ATP = L-tyrosyl-tRNA(Tyr) + AMP + diphosphate + H(+). Its function is as follows. Catalyzes the attachment of tyrosine to tRNA(Tyr) in a two-step reaction: tyrosine is first activated by ATP to form Tyr-AMP and then transferred to the acceptor end of tRNA(Tyr). This Methanoculleus marisnigri (strain ATCC 35101 / DSM 1498 / JR1) protein is Tyrosine--tRNA ligase.